Consider the following 310-residue polypeptide: ADP-L-glycero-D-manno-heptose-6-epimerase (310 aa).

NADP(+)-binding positions include 10–11 (FI), 31–32 (DN), lysine 38, lysine 53, 75–79 (EGACS), and asparagine 92. Residue tyrosine 140 is the Proton acceptor of the active site. Lysine 144 lines the NADP(+) pocket. Asparagine 169 serves as a coordination point for substrate. Positions 170 and 178 each coordinate NADP(+). The active-site Proton acceptor is lysine 178. Residues serine 180, histidine 187, 201–204 (FEGS), arginine 209, and tyrosine 272 contribute to the substrate site.

This sequence belongs to the NAD(P)-dependent epimerase/dehydratase family. HldD subfamily. As to quaternary structure, homopentamer. Requires NADP(+) as cofactor.

The enzyme catalyses ADP-D-glycero-beta-D-manno-heptose = ADP-L-glycero-beta-D-manno-heptose. It functions in the pathway nucleotide-sugar biosynthesis; ADP-L-glycero-beta-D-manno-heptose biosynthesis; ADP-L-glycero-beta-D-manno-heptose from D-glycero-beta-D-manno-heptose 7-phosphate: step 4/4. In terms of biological role, catalyzes the interconversion between ADP-D-glycero-beta-D-manno-heptose and ADP-L-glycero-beta-D-manno-heptose via an epimerization at carbon 6 of the heptose. This Klebsiella pneumoniae (strain 342) protein is ADP-L-glycero-D-manno-heptose-6-epimerase.